A 118-amino-acid chain; its full sequence is LYR motif containing protein 1 (118 aa).

A disordered region spans residues 91–118 (TQKGRKLRAQQRLRKQAKPVYLQSQDET). Basic residues predominate over residues 93-107 (KGRKLRAQQRLRKQA).

Belongs to the complex I LYR family.

This is LYR motif containing protein 1 (lyrm1) from Danio rerio (Zebrafish).